We begin with the raw amino-acid sequence, 537 residues long: Chaperonin GroEL (537 aa).

Residues 29-32, 86-90, G413, 477-479, and D493 contribute to the ATP site; these read TLGP, DGTTT, and NAA.

The protein belongs to the chaperonin (HSP60) family. Forms a cylinder of 14 subunits composed of two heptameric rings stacked back-to-back. Interacts with the co-chaperonin GroES.

Its subcellular location is the cytoplasm. It catalyses the reaction ATP + H2O + a folded polypeptide = ADP + phosphate + an unfolded polypeptide.. Together with its co-chaperonin GroES, plays an essential role in assisting protein folding. The GroEL-GroES system forms a nano-cage that allows encapsulation of the non-native substrate proteins and provides a physical environment optimized to promote and accelerate protein folding. This is Chaperonin GroEL from Parascardovia denticolens (Bifidobacterium denticolens).